The primary structure comprises 295 residues: Ribosomal RNA small subunit methyltransferase A (295 aa).

S-adenosyl-L-methionine is bound by residues N40, V42, G67, E88, D118, and N135.

Belongs to the class I-like SAM-binding methyltransferase superfamily. rRNA adenine N(6)-methyltransferase family. RsmA subfamily.

It is found in the cytoplasm. It carries out the reaction adenosine(1518)/adenosine(1519) in 16S rRNA + 4 S-adenosyl-L-methionine = N(6)-dimethyladenosine(1518)/N(6)-dimethyladenosine(1519) in 16S rRNA + 4 S-adenosyl-L-homocysteine + 4 H(+). Its function is as follows. Specifically dimethylates two adjacent adenosines (A1518 and A1519) in the loop of a conserved hairpin near the 3'-end of 16S rRNA in the 30S particle. May play a critical role in biogenesis of 30S subunits. The sequence is that of Ribosomal RNA small subunit methyltransferase A from Arthrobacter sp. (strain FB24).